A 161-amino-acid chain; its full sequence is MKFPSILLAILLFKPITARFTPLGIDEFYIKPCERKIVYTTDKHDKCLMRRLEIEMDTGENQGYVKCVFKEFGYLNGEGQFNKQALLKDYHQAGFKNKDKAVLESYDGCMKNYGPTPNAMKILDCVTKDKDFPKVINARRERNSDWKPDWIQAYCGVTKLF.

Residues 1-18 (MKFPSILLAILLFKPITA) form the signal peptide. 3 cysteine pairs are disulfide-bonded: C33–C67, C47–C155, and C109–C125.

The protein belongs to the PBP/GOBP family.

It localises to the secreted. In terms of biological role, in contrast to the related D7 salivary proteins, does not bind serotonin. This is Short form salivary protein D7S from Culex quinquefasciatus (Southern house mosquito).